Reading from the N-terminus, the 447-residue chain is Selenide, water dikinase 3 (447 aa).

Residue Sec-50 is part of the active site. Residue Sec-50 is a non-standard amino acid, selenocysteine. ATP contacts are provided by residues Lys-53, 103 to 105 (GMD), Asp-123, Asp-146, and 197 to 200 (GGQT). Residue Asp-105 coordinates Mg(2+). Mg(2+) is bound at residue Asp-146. Position 301 (Asp-301) interacts with Mg(2+).

This sequence belongs to the selenophosphate synthase 1 family. In terms of assembly, homodimer. Requires Mg(2+) as cofactor. As to expression, in the embryo, expressed in retina, olfactory vesicles, tectum, pronephros ducts and myotomes at 24 hours post-fertilization and in retina, tectum, liver and intestinal bulb 3 days after fertilization.

The catalysed reaction is hydrogenselenide + ATP + H2O = selenophosphate + AMP + phosphate + 2 H(+). In terms of biological role, synthesizes selenophosphate from selenide and ATP. In Danio rerio (Zebrafish), this protein is Selenide, water dikinase 3.